The sequence spans 252 residues: MRIDILSLFPNMFQATMGESIIGKAQDNGFIDINVTDFRQYTTDKHNHVDDAPFGGGAGMLLQAQPIFDAMDAIHEQTKDQYSKGRVILMDPAGRKFDQAYAKELAQEDHLTFICGHYEGYDERIRNLVTDEASLGDYVLTGGELAAMVMIDATVRFVPGVLGNMSSPMGDSFSNGLLEYPQYTRPADFRGMKVPEVLTSGNHQKIKEWRMRESLRRTLHRRPDLLKTAKLSREQQLMLEDIKLDEDPTVPD.

Residues Gly-116 and 135 to 140 each bind S-adenosyl-L-methionine; that span reads LGDYVL.

It belongs to the RNA methyltransferase TrmD family. Homodimer.

It localises to the cytoplasm. The enzyme catalyses guanosine(37) in tRNA + S-adenosyl-L-methionine = N(1)-methylguanosine(37) in tRNA + S-adenosyl-L-homocysteine + H(+). In terms of biological role, specifically methylates guanosine-37 in various tRNAs. The sequence is that of tRNA (guanine-N(1)-)-methyltransferase from Limosilactobacillus reuteri (strain DSM 20016) (Lactobacillus reuteri).